A 463-amino-acid chain; its full sequence is Fumarate hydratase class II (463 aa).

Substrate contacts are provided by residues 97-99, 128-131, 138-140, and Thr-186; these read SGT, HPND, and SSN. Residue His-187 is the Proton donor/acceptor of the active site. Ser-317 is a catalytic residue. Residues Ser-318 and 323 to 325 each bind substrate; that span reads KVN.

Belongs to the class-II fumarase/aspartase family. Fumarase subfamily. As to quaternary structure, homotetramer.

The protein resides in the cytoplasm. The catalysed reaction is (S)-malate = fumarate + H2O. It functions in the pathway carbohydrate metabolism; tricarboxylic acid cycle; (S)-malate from fumarate: step 1/1. Its function is as follows. Involved in the TCA cycle. Catalyzes the stereospecific interconversion of fumarate to L-malate. The chain is Fumarate hydratase class II from Helicobacter pylori (strain J99 / ATCC 700824) (Campylobacter pylori J99).